Reading from the N-terminus, the 225-residue chain is 3-dehydroquinate dehydratase (225 aa).

Residues serine 6, 30–32 (EWR), and arginine 62 each bind 3-dehydroquinate. The active-site Proton donor/acceptor is the histidine 118. The active-site Schiff-base intermediate with substrate is the lysine 143. Residues arginine 186, serine 205, and glutamine 209 each coordinate 3-dehydroquinate.

This sequence belongs to the type-I 3-dehydroquinase family. As to quaternary structure, homodimer.

The enzyme catalyses 3-dehydroquinate = 3-dehydroshikimate + H2O. The protein operates within metabolic intermediate biosynthesis; chorismate biosynthesis; chorismate from D-erythrose 4-phosphate and phosphoenolpyruvate: step 3/7. Involved in the third step of the chorismate pathway, which leads to the biosynthesis of aromatic amino acids. Catalyzes the cis-dehydration of 3-dehydroquinate (DHQ) and introduces the first double bond of the aromatic ring to yield 3-dehydroshikimate. This is 3-dehydroquinate dehydratase from Streptococcus sanguinis (strain SK36).